Reading from the N-terminus, the 100-residue chain is Urease subunit gamma (100 aa).

Belongs to the urease gamma subunit family. Heterotrimer of UreA (gamma), UreB (beta) and UreC (alpha) subunits. Three heterotrimers associate to form the active enzyme.

Its subcellular location is the cytoplasm. The catalysed reaction is urea + 2 H2O + H(+) = hydrogencarbonate + 2 NH4(+). Its pathway is nitrogen metabolism; urea degradation; CO(2) and NH(3) from urea (urease route): step 1/1. The protein is Urease subunit gamma of Tolumonas auensis (strain DSM 9187 / NBRC 110442 / TA 4).